The following is a 61-amino-acid chain: Adipokinetic prohormone type 2 (61 aa).

The first 22 residues, 1-22, serve as a signal peptide directing secretion; the sequence is MRQGCALTLMLLVVVCAALSAA. At Gln23 the chain carries Pyrrolidone carboxylic acid. Trp30 carries the post-translational modification Tryptophan amide.

Belongs to the AKH/HRTH/RPCH family. Adipokinetic hormone precursor-related peptide (APRP) can form three type of disulfide-bond dimers: p1 (alpha-alpha), p2 (alpha-beta), and p3 (beta-beta).

The protein resides in the secreted. This hormone, released from cells in the corpora cardiaca, causes release of diglycerides from the fat body and stimulation of muscles to use these diglycerides as an energy source during energy-demanding processes. This Schistocerca nitens (Vagrant locust) protein is Adipokinetic prohormone type 2.